The chain runs to 675 residues: Protein REPRESSOR OF VERNALIZATION 1 (675 aa).

The segment at 1-143 is disordered; it reads MGRRRRFTQQ…DPVKVTGKGK (143 aa). Positions 22 to 31 are enriched in low complexity; the sequence is AEPPKTAKPA. The segment covering 48 to 70 has biased composition (acidic residues); sequence EEEDEDEEDELELEDEEDDEKDL. Over residues 71 to 86 the composition is skewed to basic and acidic residues; the sequence is EEMRRNEEEERREETR. Residues 73–80 carry the Nuclear localization signal motif; that stretch reads MRRNEEEE. Over residues 87 to 96 the composition is skewed to basic residues; it reads TRRRRGRKPK. Residues 113–127 show a composition bias toward acidic residues; the sequence is SDEEEEEEVREEDST. Residues 157–275 form the BAH domain; it reads NTFELEDPVL…TVAKKLWNLT (119 aa). 3 disordered regions span residues 300–349, 493–512, and 587–675; these read ELPD…KPET, GLTP…LQMT, and LASP…ADHE. Composition is skewed to basic and acidic residues over residues 333–346, 499–512, and 613–627; these read VSRD…HFVK, KTSE…LQMT, and KLEK…KPEE. Positions 372–518 constitute a TFIIS central domain; it reads YRDKWLDKLL…LQMTDARCER (147 aa).

Expressed constitutively.

The protein localises to the nucleus. Component of a grass-specific mechanism of vernalization, a process by which prolonged cold exposure provides competence to flower in daylengths longer than 12 hours. Negative regulator of flowering required for vernalization establishment by repressing VRN1 before vernalization and in the fall season. This chain is Protein REPRESSOR OF VERNALIZATION 1, found in Brachypodium distachyon (Purple false brome).